Consider the following 105-residue polypeptide: Large ribosomal subunit protein bL34m (105 aa).

The N-terminal 16 residues, 1–16 (MPLFARLCQPQSRRMF), are a transit peptide targeting the mitochondrion.

It belongs to the bacterial ribosomal protein bL34 family. Component of the mitochondrial large ribosomal subunit (mt-LSU). Mature yeast 74S mitochondrial ribosomes consist of a small (37S) and a large (54S) subunit. The 37S small subunit contains a 15S ribosomal RNA (15S mt-rRNA) and 34 different proteins. The 54S large subunit contains a 21S rRNA (21S mt-rRNA) and 46 different proteins.

The protein resides in the mitochondrion. Functionally, component of the mitochondrial ribosome (mitoribosome), a dedicated translation machinery responsible for the synthesis of mitochondrial genome-encoded proteins, including at least some of the essential transmembrane subunits of the mitochondrial respiratory chain. The mitoribosomes are attached to the mitochondrial inner membrane and translation products are cotranslationally integrated into the membrane. The sequence is that of Large ribosomal subunit protein bL34m from Saccharomyces cerevisiae (strain ATCC 204508 / S288c) (Baker's yeast).